The chain runs to 328 residues: 6-phosphogluconolactonase (328 aa).

It belongs to the cycloisomerase 2 family.

It carries out the reaction 6-phospho-D-glucono-1,5-lactone + H2O = 6-phospho-D-gluconate + H(+). It functions in the pathway carbohydrate degradation; pentose phosphate pathway; D-ribulose 5-phosphate from D-glucose 6-phosphate (oxidative stage): step 2/3. In terms of biological role, catalyzes the hydrolysis of 6-phosphogluconolactone to 6-phosphogluconate. In Photorhabdus laumondii subsp. laumondii (strain DSM 15139 / CIP 105565 / TT01) (Photorhabdus luminescens subsp. laumondii), this protein is 6-phosphogluconolactonase.